We begin with the raw amino-acid sequence, 191 residues long: UPF0149 protein VS_2635 (191 aa).

The protein belongs to the UPF0149 family.

This chain is UPF0149 protein VS_2635, found in Vibrio atlanticus (strain LGP32) (Vibrio splendidus (strain Mel32)).